Consider the following 2021-residue polypeptide: Fanconi anemia group M protein homolog (2021 aa).

Position 30 is a phosphoserine (Ser30). The region spanning 86–254 is the Helicase ATP-binding domain; the sequence is ISRSALFCNT…QVITNLLIGK (169 aa). An ATP-binding site is contributed by 99–106; that stretch reads LPTGLGKT. The DEAH box signature appears at 202–205; the sequence is DEAH. The 176-residue stretch at 437-612 folds into the Helicase C-terminal domain; the sequence is KLEEVILEHF…VLRLYQGSPR (176 aa). 9 disordered regions span residues 638 to 657, 837 to 886, 1002 to 1049, 1244 to 1273, 1296 to 1319, 1369 to 1441, 1447 to 1466, 1615 to 1700, and 1712 to 1732; these read RSVQ…SKSN, PCRA…RMAD, CSPY…LPGT, GAAD…AISP, ASSS…SSKT, PRRT…RTCP, KGRN…RSQV, NKKQ…QPSI, and AQSH…ESRK. Polar residues predominate over residues 1018–1035; sequence ASHSAGNSQQNLESNSAK. Residues 1249–1259 are compositionally biased toward basic and acidic residues; the sequence is SGRHSDKEIKD. Basic and acidic residues predominate over residues 1370 to 1379; sequence RRTEVEHLTS. The span at 1388–1397 shows a compositional bias: basic residues; sequence RKTKKPKRNV. Ser1637 is subject to Phosphoserine. Low complexity predominate over residues 1669-1682; it reads SGPSGSSVPPQVLS. The span at 1684-1700 shows a compositional bias: polar residues; the sequence is PSWNQSSRQRLQVQPSI. An interaction with FAAP24 region spans residues 1689-2009; that stretch reads SSRQRLQVQP…LNQERQKPDT (321 aa).

It belongs to the DEAD box helicase family. DEAH subfamily. FANCM sub-subfamily. In terms of assembly, component of the Fanconi anemia (FA) core complex, which consists of CENPS, CENPX, FANCA, FANCB, FANCC, FANCE, FANCF, FANCG, FANCL, FANCM, FAAP24 and FAAP100. The FA core complex associates with Bloom syndrome (BLM) complex, which consists of at least BLM, DNA topoisomerase 3-alpha/TOP3A, RMI1/BLAP75, RPA1/RPA70 and RPA2/RPA32. This supercomplex between FA and BLM complexes has been called BRAFT. Forms a discrete complex with CENPS and CENPX, called FANCM-MHF; this interaction stimulates DNA binding and replication fork remodeling by FANCM and stabilizes the binding partners. Forms a heterodimer with FAAP24; this interaction increases FANCM single-stranded DNA-binding activity. Post-translationally, phosphorylated; hyperphosphorylated in response to genotoxic stress.

The protein resides in the nucleus. It catalyses the reaction ATP + H2O = ADP + phosphate + H(+). DNA-dependent ATPase component of the Fanconi anemia (FA) core complex. Required for the normal activation of the FA pathway, leading to monoubiquitination of the FANCI-FANCD2 complex in response to DNA damage, cellular resistance to DNA cross-linking drugs, and prevention of chromosomal breakage. In complex with CENPS and CENPX, binds double-stranded DNA (dsDNA), fork-structured DNA (fsDNA) and Holliday junction substrates. Its ATP-dependent DNA branch migration activity can process branched DNA structures such as a movable replication fork. This activity is strongly stimulated in the presence of CENPS and CENPX. In complex with FAAP24, efficiently binds to single-strand DNA (ssDNA), splayed-arm DNA, and 3'-flap substrates. In vitro, on its own, strongly binds ssDNA oligomers and weakly fsDNA, but does not bind to dsDNA. The chain is Fanconi anemia group M protein homolog (Fancm) from Mus musculus (Mouse).